The chain runs to 594 residues: Insulin-like growth factor 2 mRNA-binding protein 3-A (594 aa).

2 consecutive RRM domains span residues 2-75 (NKLY…HSVP) and 81-156 (RKLQ…YIPD). The span at 161–177 (PQAPSQQLQQQPQQQHP) shows a compositional bias: low complexity. A disordered region spans residues 161 to 206 (PQAPSQQLQQQPQQQHPQGRRGFGQRGPARQGSPGAAARPKPQTEV). 2 KH domains span residues 205–270 (EVPL…CKII) and 286–353 (EIPL…EEEI). A disordered region spans residues 392–415 (GMPPPSVGVPSPTSSTSYPPFGQQ). Low complexity predominate over residues 399–411 (GVPSPTSSTSYPP). 2 consecutive KH domains span residues 418–483 (SETV…QGRI) and 500–566 (KLET…QRKI).

Belongs to the RRM IMP/VICKZ family. As to quaternary structure, homodimer and multimer. Associates with microtubules. Interaction with a translocation machinery protein TRAPA of the endoplasmic reticulum. Component of a mRNP complex, at least composed of DAZAP1, IGF2BP3, STAU and VgRBP60. The mRNP complex with DAZAP1, IGF2BP3, STAU and VgRBP60 is only found in the cytoplasm. Interacts with a hnRNP 1 related RNA transport protein VgRBP60 both in the nucleus (in a RNA-independent manner) and the cytoplasm (in a RNA-dependent manner). Found in a B3 activator complex.

It is found in the nucleus. Its subcellular location is the cytoplasm. The protein resides in the endoplasmic reticulum. Functionally, RNA-binding protein that acts as a regulator of mRNA transport and localization. Binds to the RNA sequence motif 5'-UUCAC-3'. Preferentially binds to N6-methyladenosine (m6A)-containing mRNAs and increases their stability. Mediates the specific association of Vg1 RNA to microtubules. Binds specifically to the vegetal localization elements (VLE or VgLE) in the 3'-UTR of Vg1 and VegT mRNAs. Binds to the Vg1 and VegT mRNAs in both the nucleus and the cytoplasm. May regulate mRNA translation. Acts as a transcription regulator. Binds to the 5'-[TA]GGTTACT-3' motif within element 3 of the TFIIIA gene promoter. This chain is Insulin-like growth factor 2 mRNA-binding protein 3-A (igf2bp3-a), found in Xenopus laevis (African clawed frog).